Consider the following 127-residue polypeptide: Holo-[acyl-carrier-protein] synthase (127 aa).

Mg(2+) is bound by residues D8 and E59.

It belongs to the P-Pant transferase superfamily. AcpS family. It depends on Mg(2+) as a cofactor.

It is found in the cytoplasm. The enzyme catalyses apo-[ACP] + CoA = holo-[ACP] + adenosine 3',5'-bisphosphate + H(+). In terms of biological role, transfers the 4'-phosphopantetheine moiety from coenzyme A to a Ser of acyl-carrier-protein. The sequence is that of Holo-[acyl-carrier-protein] synthase from Rickettsia bellii (strain OSU 85-389).